We begin with the raw amino-acid sequence, 860 residues long: Transcription factor E2F8 (860 aa).

A disordered region spans residues 1 to 114 (MENQKENLFS…NEKSQPSRKE (114 aa)). Phosphoserine is present on serine 71. Composition is skewed to basic and acidic residues over residues 74 to 84 (IRSRDQKRGLS) and 92 to 114 (EARD…SRKE). 2 consecutive DNA-binding regions follow at residues 112 to 181 (RKEK…TWHG) and 261 to 347 (RKDK…KWTG). 2 disordered regions span residues 407–433 (RRKI…PPVP) and 533–616 (TPPH…PKED). The span at 411-426 (SSAPSSPVKSSKAESS) shows a compositional bias: low complexity. 2 positions are modified to phosphoserine: serine 412 and serine 416. The span at 542-554 (VCPTQSSNATGSK) shows a compositional bias: polar residues. Composition is skewed to basic and acidic residues over residues 555–565 (DPTDAPTEKTA) and 586–596 (RSKETTGDRGT).

The protein belongs to the E2F/DP family. Homodimer and heterodimer: mainly forms homodimers and, to a lesser extent, heterodimers with E2F8. Dimerization is important for DNA-binding. Interacts with HIF1A.

It is found in the nucleus. Atypical E2F transcription factor that participates in various processes such as angiogenesis and polyploidization of specialized cells. Mainly acts as a transcription repressor that binds DNA independently of DP proteins and specifically recognizes the E2 recognition site 5'-TTTC[CG]CGC-3'. Directly represses transcription of classical E2F transcription factors such as E2F1: component of a feedback loop in S phase by repressing the expression of E2F1, thereby preventing p53/TP53-dependent apoptosis. Plays a key role in polyploidization of cells in placenta and liver by regulating the endocycle, probably by repressing genes promoting cytokinesis and antagonizing action of classical E2F proteins (E2F1, E2F2 and/or E2F3). Required for placental development by promoting polyploidization of trophoblast giant cells. Acts as a promoter of sprouting angiogenesis, possibly by acting as a transcription activator: associates with HIF1A, recognizes and binds the VEGFA promoter, which is different from canonical E2 recognition site, and activates expression of the VEGFA gene. This chain is Transcription factor E2F8 (E2f8), found in Rattus norvegicus (Rat).